Reading from the N-terminus, the 261-residue chain is 2,3-dihydro-2,3-dihydroxybenzoate dehydrogenase (261 aa).

12-36 (FITGAAQGIGEAVARTLASQGAHIA) lines the NAD(+) pocket. Serine 144 is a binding site for substrate. Tyrosine 157 acts as the Proton acceptor in catalysis.

This sequence belongs to the short-chain dehydrogenases/reductases (SDR) family.

Its subcellular location is the cytoplasm. It catalyses the reaction (2S,3S)-2,3-dihydroxy-2,3-dihydrobenzoate + NAD(+) = 2,3-dihydroxybenzoate + NADH + H(+). It functions in the pathway siderophore biosynthesis; bacillibactin biosynthesis. This chain is 2,3-dihydro-2,3-dihydroxybenzoate dehydrogenase (dhbA), found in Bacillus subtilis (strain 168).